A 210-amino-acid polypeptide reads, in one-letter code: Neurotrophin-4 (210 aa).

An N-terminal signal peptide occupies residues 1–24 (MLPLPSCSLPILLLFLLPSVPIES). Positions 25–80 (QPPPSTLPPFLAPEWDLLSPRVVLSRGAPAGPPLLFLLEAGAFRESAGAPANRSRR) are excised as a propeptide. A glycan (N-linked (GlcNAc...) asparagine) is linked at Asn-76. 3 disulfides stabilise this stretch: Cys-97-Cys-170, Cys-141-Cys-199, and Cys-158-Cys-201.

Belongs to the NGF-beta family. In terms of tissue distribution, highest levels in prostate, lower levels in thymus, placenta, and skeletal muscle. Expressed in embryonic and adult tissues.

It localises to the secreted. Its function is as follows. Target-derived survival factor for peripheral sensory sympathetic neurons. May promote ameloblast differentiation and subsequent reduction in proliferation of ameloblasts. This Homo sapiens (Human) protein is Neurotrophin-4 (NTF4).